We begin with the raw amino-acid sequence, 688 residues long: Polyphosphate kinase (688 aa).

Asparagine 45 serves as a coordination point for ATP. Mg(2+)-binding residues include arginine 375 and arginine 405. The region spanning 430–464 (PGLKIHAKLFLISRKENGEVVRYAHIGTGNFNEKT) is the PLD phosphodiesterase domain. Histidine 435 acts as the Phosphohistidine intermediate in catalysis. ATP is bound by residues tyrosine 468, arginine 564, and histidine 592.

The protein belongs to the polyphosphate kinase 1 (PPK1) family. The cofactor is Mg(2+). In terms of processing, an intermediate of this reaction is the autophosphorylated ppk in which a phosphate is covalently linked to a histidine residue through a N-P bond.

The catalysed reaction is [phosphate](n) + ATP = [phosphate](n+1) + ADP. Functionally, catalyzes the reversible transfer of the terminal phosphate of ATP to form a long-chain polyphosphate (polyP). This Escherichia coli O157:H7 protein is Polyphosphate kinase.